The sequence spans 341 residues: Phosphoribosylformylglycinamidine cyclo-ligase (341 aa).

Belongs to the AIR synthase family.

Its subcellular location is the cytoplasm. It catalyses the reaction 2-formamido-N(1)-(5-O-phospho-beta-D-ribosyl)acetamidine + ATP = 5-amino-1-(5-phospho-beta-D-ribosyl)imidazole + ADP + phosphate + H(+). Its pathway is purine metabolism; IMP biosynthesis via de novo pathway; 5-amino-1-(5-phospho-D-ribosyl)imidazole from N(2)-formyl-N(1)-(5-phospho-D-ribosyl)glycinamide: step 2/2. This Lachnoclostridium phytofermentans (strain ATCC 700394 / DSM 18823 / ISDg) (Clostridium phytofermentans) protein is Phosphoribosylformylglycinamidine cyclo-ligase.